The sequence spans 639 residues: AP2-like ethylene-responsive transcription factor CRL5 (639 aa).

2 disordered regions span residues 25-59 and 258-277; these read PHMA…QQQH and GRKR…HHRK. Residues 43 to 59 are compositionally biased toward low complexity; it reads QQQQQQQQQQHHQQQQH. DNA-binding regions (AP2/ERF) lie at residues 288-351 and 387-445; these read QYRG…INFP and MYRG…TNFD. A compositionally biased stretch (low complexity) spans 547 to 561; sequence QQQQQHMSMSAASSL. The interval 547–579 is disordered; that stretch reads QQQQQHMSMSAASSLVTSLSNSREGSPDRGGGL.

The protein belongs to the AP2/ERF transcription factor family. AP2 subfamily. Highly expressed at the base of the stem. Expressed in stems. Expressed a low levels in crown roots and seeds. Expressed in the stem region where adventitious (crown) root initiation occurs.

It is found in the nucleus. Functionally, acts as a positive regulator of adventitious (crown) root formation by promoting its initiation. Promotes adventitious root initiation through repression of cytokinin signaling by positively regulating the two-component response regulator RR1. Regulated by the auxin response factor and transcriptional activator ARF23/ARF1. The protein is AP2-like ethylene-responsive transcription factor CRL5 of Oryza sativa subsp. japonica (Rice).